A 117-amino-acid chain; its full sequence is NADH-ubiquinone oxidoreductase chain 3 (117 aa).

Helical transmembrane passes span 4–24 (IILI…LASI), 60–80 (ITII…MIII), and 86–106 (IMIW…GLYH).

Belongs to the complex I subunit 3 family.

The protein resides in the mitochondrion membrane. The enzyme catalyses a ubiquinone + NADH + 5 H(+)(in) = a ubiquinol + NAD(+) + 4 H(+)(out). Its function is as follows. Core subunit of the mitochondrial membrane respiratory chain NADH dehydrogenase (Complex I) that is believed to belong to the minimal assembly required for catalysis. Complex I functions in the transfer of electrons from NADH to the respiratory chain. The immediate electron acceptor for the enzyme is believed to be ubiquinone. The chain is NADH-ubiquinone oxidoreductase chain 3 (mt:ND3) from Drosophila subobscura (Fruit fly).